The sequence spans 193 residues: Ion-translocating oxidoreductase complex subunit A (193 aa).

6 helical membrane passes run 5 to 25, 39 to 59, 63 to 83, 102 to 122, 134 to 154, and 171 to 191; these read LLLF…FLGL, MGMG…AWLI, ILIP…VIAV, LLGI…VALL, ALYG…FTAI, and AIAL…SGLV.

Belongs to the NqrDE/RnfAE family. As to quaternary structure, the complex is composed of six subunits: RsxA, RsxB, RsxC, RsxD, RsxE and RsxG.

The protein resides in the cell inner membrane. In terms of biological role, part of a membrane-bound complex that couples electron transfer with translocation of ions across the membrane. Required to maintain the reduced state of SoxR. This is Ion-translocating oxidoreductase complex subunit A from Shigella boydii serotype 4 (strain Sb227).